Reading from the N-terminus, the 656-residue chain is Ribosome quality control complex subunit 1 (656 aa).

Residues 1–11 (MSSRALRKLQR) are compositionally biased toward basic residues. Disordered regions lie at residues 1–35 (MSSR…FSST), 51–122 (NNAI…LESS), and 634–656 (LFTS…GQGD). The segment covering 17 to 32 (LLEEALDSESDEDDEF) has biased composition (acidic residues). A compositionally biased stretch (basic and acidic residues) spans 51-63 (NNAINSEAEKSVS). Ser56, Ser61, and Ser63 each carry phosphoserine. The segment covering 83–101 (KKAKNKKKKKKQQKKKKVT) has biased composition (basic residues). The span at 102-122 (GKRDLDNQSSDNEKLEGLESS) shows a compositional bias: basic and acidic residues. Phosphoserine occurs at positions 110 and 111.

This sequence belongs to the TCF25 family. As to quaternary structure, component of the ribosome quality control complex (RQC), composed of the E3 ubiquitin ligase rkr1/ltn1, rqc1 and mtr1/rqc2, as well as cdc48 and its ubiquitin-binding cofactors. RQC forms a stable complex with 60S ribosomal subunits.

The protein localises to the cytoplasm. Functionally, component of the ribosome quality control complex (RQC), a ribosome-associated complex that mediates ubiquitination and extraction of incompletely synthesized nascent chains for proteasomal degradation. Within the RQC complex, rqc1 is essential for the recruitment of cdc48 to incompletely synthesized nascent polypeptides that are ubiquitinated by rkr1/ltn1. This chain is Ribosome quality control complex subunit 1, found in Schizosaccharomyces pombe (strain 972 / ATCC 24843) (Fission yeast).